We begin with the raw amino-acid sequence, 157 residues long: uncharacterized protein (157 aa).

The N-terminal stretch at 1–28 (MKRLFMKASLVLFAVVFVFAVKGAPAKA) is a signal peptide.

This is an uncharacterized protein from Bacillus subtilis (strain 168).